We begin with the raw amino-acid sequence, 742 residues long: Feeding circuit activating peptides (742 aa).

Positions 1-22 (MTFAASFRALLCVLFCAALVHC) are cleaved as a signal peptide. A propeptide spanning residues 23-98 (KTRTKRYVPH…YGALADRDVD (76 aa)) is cleaved from the precursor. Positions 117 to 131 (GSLDAIPQDTDASSD) are cleaved as a propeptide — connecting peptide. Propeptides lie at residues 164–168 (GSGAE), 202–220 (RGTGGQMHASSPRVVPWGS), 236–253 (DTELVENRQTTGQQTEVN), 271–275 (SGEAG), 293–297 (ADDQG), 315–321 (FDNSAGE), 339–341 (AGD), 359–366 (FDNDISGQ), 384–388 (SDQDN), 406–410 (ADDDG), 428–432 (ADEDD), 450–454 (GDEDD), 472–476 (ADEDD), 494–498 (SDEDD), 516–520 (SDEDD), 538–542 (ADEDD), 560–564 (NSPGL), 582–592 (NNEYYSGAENE), 610–614 (DQPGE), and 647–742 (NSAD…AGQM).

In terms of tissue distribution, expressed in pleural, pedal, abdominal, buccal and cerebral ganglia.

The protein resides in the secreted. Functionally, initiates organized rhythmic motor output of feeding circuit. This chain is Feeding circuit activating peptides, found in Aplysia californica (California sea hare).